The primary structure comprises 728 residues: Catalase-peroxidase 1 (728 aa).

Positions 91 to 218 (WHSAGTYRIA…LAAVQMGLIY (128 aa)) form a cross-link, tryptophyl-tyrosyl-methioninium (Trp-Tyr) (with M-244). The Proton acceptor role is filled by histidine 92. The tryptophyl-tyrosyl-methioninium (Tyr-Met) (with W-91) cross-link spans 218–244 (YVNPEGPDGNPDPVAAARDIRDTFARM). Position 259 (histidine 259) interacts with heme b.

This sequence belongs to the peroxidase family. Peroxidase/catalase subfamily. Homodimer or homotetramer. Heme b is required as a cofactor. Formation of the three residue Trp-Tyr-Met cross-link is important for the catalase, but not the peroxidase activity of the enzyme.

The enzyme catalyses H2O2 + AH2 = A + 2 H2O. It catalyses the reaction 2 H2O2 = O2 + 2 H2O. In terms of biological role, bifunctional enzyme with both catalase and broad-spectrum peroxidase activity. This Burkholderia ambifaria (strain ATCC BAA-244 / DSM 16087 / CCUG 44356 / LMG 19182 / AMMD) (Burkholderia cepacia (strain AMMD)) protein is Catalase-peroxidase 1.